A 344-amino-acid chain; its full sequence is L-erythro-3,5-diaminohexanoate dehydrogenase (344 aa).

It belongs to the KDD family. As to quaternary structure, homodimer.

It catalyses the reaction (3S,5S)-3,5-diaminohexanoate + NAD(+) + H2O = (5S)-5-amino-3-oxohexanoate + NH4(+) + NADH + H(+). Its pathway is amino-acid degradation; L-lysine degradation via acetate pathway. Functionally, involved in the anaerobic fermentation of lysine. Catalyzes the oxidative deamination of L-erythro-3,5-diaminohexanoate (3,5-DAH) to 3-keto-5-aminohexanoate (KAH). The protein is L-erythro-3,5-diaminohexanoate dehydrogenase of Acetoanaerobium sticklandii (strain ATCC 12662 / DSM 519 / JCM 1433 / CCUG 9281 / NCIMB 10654 / HF) (Clostridium sticklandii).